Reading from the N-terminus, the 138-residue chain is Transcription antitermination protein NusB (138 aa).

This sequence belongs to the NusB family.

Involved in transcription antitermination. Required for transcription of ribosomal RNA (rRNA) genes. Binds specifically to the boxA antiterminator sequence of the ribosomal RNA (rrn) operons. This chain is Transcription antitermination protein NusB, found in Helicobacter pylori (strain ATCC 700392 / 26695) (Campylobacter pylori).